The chain runs to 437 residues: UDP-sugar transporter protein SLC35A5 (437 aa).

Residues 1-21 (MKVIFLRQLKTRGMERKCSRR) are Cytoplasmic-facing. Residues 22–42 (PGLGPPTLYTFLLGIIFITLS) form a helical membrane-spanning segment. Residues 43–65 (SSRILLVKYSANEENKYDYLPTT) lie on the Lumenal side of the membrane. A helical transmembrane segment spans residues 66–86 (VNVCSELMKLILCILVSLCVI). Residues 87–106 (KKEDHQSRHLRCTSWKEFSS) are Cytoplasmic-facing. Residues 107–129 (FMKWSIPAFLYFLDNLIVFYVLS) traverse the membrane as a helical segment. Residues 130–132 (YLQ) lie on the Lumenal side of the membrane. A helical transmembrane segment spans residues 133-155 (PAMAVIFSNFSIITTALLFRIVL). Residues 156–158 (KRH) are Cytoplasmic-facing. The chain crosses the membrane as a helical span at residues 159–179 (LNWIQWASLLILFLSIVALTA). Residues 180 to 241 (STKTSQHELA…TTARVFSHIR (62 aa)) are Lumenal-facing. Asn217 is a glycosylation site (N-linked (GlcNAc...) asparagine). The chain crosses the membrane as a helical span at residues 242–262 (LGLGHVLIIVQCFISSMANIY). At 263–276 (NEKILKEGTQLTES) the chain is on the cytoplasmic side. A helical membrane pass occupies residues 277–297 (IFIQNSKLYFFGIVFNGLTLV). At 298–316 (LQSSNRDQIQNCGFFYGHN) the chain is on the lumenal side. A helical transmembrane segment spans residues 317–337 (AFSVVLIFVTAFQGLSVAFIL). Topologically, residues 338 to 343 (KFLDNM) are cytoplasmic. The chain crosses the membrane as a helical span at residues 344–364 (FHVLMAQVTTVIITTVSVLVF). Over 365-367 (DFR) the chain is Lumenal. Residues 368–388 (PSLDFFLEAPSVLLSIFIYNA) traverse the membrane as a helical segment. Topologically, residues 389-437 (SKPQNLECAPKQERIRHLSGSLWERSSGDGEELERLTKLKSDDSDDDTL) are cytoplasmic. Phosphoserine is present on residues Ser407, Ser429, and Ser432. The tract at residues 412-437 (ERSSGDGEELERLTKLKSDDSDDDTL) is disordered. Basic and acidic residues predominate over residues 421 to 430 (LERLTKLKSD).

It belongs to the nucleotide-sugar transporter family. SLC35A subfamily. Probably forms homooligomers and heterooligomers with SLC35A1, SLC35A2, SLC35A3 and SLC35A4.

It localises to the golgi apparatus membrane. It catalyses the reaction UMP(out) + UDP-alpha-D-glucuronate(in) = UMP(in) + UDP-alpha-D-glucuronate(out). The catalysed reaction is UMP(out) + UDP-N-acetyl-alpha-D-glucosamine(in) = UMP(in) + UDP-N-acetyl-alpha-D-glucosamine(out). It carries out the reaction UDP-N-acetyl-alpha-D-galactosamine(in) + UMP(out) = UDP-N-acetyl-alpha-D-galactosamine(out) + UMP(in). In terms of biological role, probable UDP-sugar:UMP transmembrane antiporter involved in UDP-alpha-D-glucuronate/UDP-GlcA, UDP-GlcNAc/UDP-N-acetyl-alpha-D-glucosamine and UDP-N-acetyl-alpha-D-galactosamine/UDP-GalNAc transport from the cytosol to the lumen of the Golgi. This Mus musculus (Mouse) protein is UDP-sugar transporter protein SLC35A5.